A 625-amino-acid chain; its full sequence is FMRFamide-activated amiloride-sensitive sodium channel (625 aa).

Over 1-67 (MKYTSAATKP…IVTSRDTKRK (67 aa)) the chain is Cytoplasmic. Residues 68-89 (VIWALLVIAGFTAATLQLSLLV) traverse the membrane as a helical segment. Over 90 to 536 (RKYLQFQVVE…LADLFADIGG (447 aa)) the chain is Extracellular. Asn-134, Asn-196, Asn-303, Asn-349, Asn-365, Asn-372, and Asn-473 each carry an N-linked (GlcNAc...) asparagine glycan. A helical membrane pass occupies residues 537 to 557 (TLGLWMGISVLTIMELIELVI). The Cytoplasmic portion of the chain corresponds to 558–625 (RLTGLVFNSE…DFRRGVESPV (68 aa)). Positions 570 to 591 (LPRGPTTVNNNNGSNNHSQSTS) are disordered. Residues 575-591 (TTVNNNNGSNNHSQSTS) show a composition bias toward low complexity.

This sequence belongs to the amiloride-sensitive sodium channel (TC 1.A.6) family. In terms of tissue distribution, muscle and nervous tissue.

The protein localises to the membrane. Its function is as follows. FMRFamide-gated ionotropic receptor. In Cornu aspersum (Brown garden snail), this protein is FMRFamide-activated amiloride-sensitive sodium channel.